We begin with the raw amino-acid sequence, 163 residues long: Nucleotide-binding protein RBAM_011030 (163 aa).

This sequence belongs to the YajQ family.

In terms of biological role, nucleotide-binding protein. In Bacillus velezensis (strain DSM 23117 / BGSC 10A6 / LMG 26770 / FZB42) (Bacillus amyloliquefaciens subsp. plantarum), this protein is Nucleotide-binding protein RBAM_011030.